We begin with the raw amino-acid sequence, 504 residues long: Anaerobic nitric oxide reductase transcription regulator NorR (504 aa).

D57 carries the post-translational modification 4-aspartylphosphate. The 230-residue stretch at M187 to V416 folds into the Sigma-54 factor interaction domain. ATP is bound by residues G215–E222 and A278–E287. The H-T-H motif DNA-binding region spans W479–K498.

The protein operates within nitrogen metabolism; nitric oxide reduction. In terms of biological role, required for the expression of anaerobic nitric oxide (NO) reductase, acts as a transcriptional activator for at least the norVW operon. Activation also requires sigma-54. This chain is Anaerobic nitric oxide reductase transcription regulator NorR, found in Escherichia coli O6:K15:H31 (strain 536 / UPEC).